The primary structure comprises 455 residues: Retinoic acid receptor beta (455 aa).

Positions 1–87 (MTTSSRTCPV…PLPPPRVYKP (87 aa)) are modulating. A disordered region spans residues 45-78 (QSHPPTSGCSTPSPASVETQSTSSEELVPSPPSP). A compositionally biased stretch (polar residues) spans 47-66 (HPPTSGCSTPSPASVETQST). 2 consecutive NR C4-type zinc fingers follow at residues 88–108 (CFVC…CEGC) and 124–148 (CHRD…LQKC). Residues 88-153 (CFVCQDKSSG…RLQKCFEVGM (66 aa)) constitute a DNA-binding region (nuclear receptor). The segment at 154–182 (SKESVRNDRNKKKKEPTKQESTENYEMTA) is hinge. One can recognise an NR LBD domain in the interval 183–417 (ELDDLTEKIR…PLIQEMLENS (235 aa)). Residues 416–455 (NSEGHEPLTPTSNGNTAEHSPSISPSSVDNSSVSQSPMVQ) form a disordered region. Residues 424 to 434 (TPTSNGNTAEH) are compositionally biased toward polar residues. Residues 435 to 455 (SPSISPSSVDNSSVSQSPMVQ) are compositionally biased toward low complexity.

It belongs to the nuclear hormone receptor family. NR1 subfamily. Heterodimer; with a RXR molecule. Binds DNA preferentially as a RAR/RXR heterodimer. As to expression, both isoforms expressed in heart, lung, kidney, liver, brain, lung and testis. Isoform Beta-1 is highly expressed in testes and brain. Levels increase during testes maturation. Isoform beta-2 is predominant in heart, kidney and lung.

It localises to the nucleus. Receptor for retinoic acid. Retinoic acid receptors bind as heterodimers to their target response elements in response to their ligands, all-trans or 9-cis retinoic acid, and regulate gene expression in various biological processes. The RAR/RXR heterodimers bind to the retinoic acid response elements (RARE) composed of tandem 5'-AGGTCA-3' sites known as DR1-DR5. May be required for Sertoli cell differentiation and spermatogenesis. This chain is Retinoic acid receptor beta (RARB), found in Coturnix japonica (Japanese quail).